We begin with the raw amino-acid sequence, 497 residues long: Glutamyl-tRNA(Gln) amidotransferase subunit A (497 aa).

Active-site charge relay system residues include lysine 85 and serine 160. Serine 184 (acyl-ester intermediate) is an active-site residue.

Belongs to the amidase family. GatA subfamily. As to quaternary structure, heterotrimer of A, B and C subunits.

It carries out the reaction L-glutamyl-tRNA(Gln) + L-glutamine + ATP + H2O = L-glutaminyl-tRNA(Gln) + L-glutamate + ADP + phosphate + H(+). In terms of biological role, allows the formation of correctly charged Gln-tRNA(Gln) through the transamidation of misacylated Glu-tRNA(Gln) in organisms which lack glutaminyl-tRNA synthetase. The reaction takes place in the presence of glutamine and ATP through an activated gamma-phospho-Glu-tRNA(Gln). This chain is Glutamyl-tRNA(Gln) amidotransferase subunit A (gatA), found in Mycobacterium leprae (strain TN).